Here is a 160-residue protein sequence, read N- to C-terminus: Ribosome maturation factor RimP (160 aa).

The protein belongs to the RimP family.

The protein localises to the cytoplasm. Required for maturation of 30S ribosomal subunits. In Geobacter sp. (strain M21), this protein is Ribosome maturation factor RimP.